The sequence spans 210 residues: Cytochrome c biogenesis ATP-binding export protein CcmA (210 aa).

Residues 4–208 (VPTLSFSKLG…GAIPAQLLEL (205 aa)) form the ABC transporter domain. An ATP-binding site is contributed by 39–46 (GANGVGKT).

This sequence belongs to the ABC transporter superfamily. CcmA exporter (TC 3.A.1.107) family. The complex is composed of two ATP-binding proteins (CcmA) and two transmembrane proteins (CcmB).

The protein resides in the cell inner membrane. It carries out the reaction heme b(in) + ATP + H2O = heme b(out) + ADP + phosphate + H(+). Its function is as follows. Part of the ABC transporter complex CcmAB involved in the biogenesis of c-type cytochromes; once thought to export heme, this seems not to be the case, but its exact role is uncertain. Responsible for energy coupling to the transport system. The protein is Cytochrome c biogenesis ATP-binding export protein CcmA of Albidiferax ferrireducens (strain ATCC BAA-621 / DSM 15236 / T118) (Rhodoferax ferrireducens).